The primary structure comprises 235 residues: Leucyl/phenylalanyl-tRNA--protein transferase (235 aa).

The protein belongs to the L/F-transferase family.

It is found in the cytoplasm. It carries out the reaction N-terminal L-lysyl-[protein] + L-leucyl-tRNA(Leu) = N-terminal L-leucyl-L-lysyl-[protein] + tRNA(Leu) + H(+). It catalyses the reaction N-terminal L-arginyl-[protein] + L-leucyl-tRNA(Leu) = N-terminal L-leucyl-L-arginyl-[protein] + tRNA(Leu) + H(+). The catalysed reaction is L-phenylalanyl-tRNA(Phe) + an N-terminal L-alpha-aminoacyl-[protein] = an N-terminal L-phenylalanyl-L-alpha-aminoacyl-[protein] + tRNA(Phe). Functionally, functions in the N-end rule pathway of protein degradation where it conjugates Leu, Phe and, less efficiently, Met from aminoacyl-tRNAs to the N-termini of proteins containing an N-terminal arginine or lysine. The polypeptide is Leucyl/phenylalanyl-tRNA--protein transferase (Magnetococcus marinus (strain ATCC BAA-1437 / JCM 17883 / MC-1)).